A 296-amino-acid polypeptide reads, in one-letter code: Acetyl-coenzyme A carboxylase carboxyl transferase subunit beta (296 aa).

One can recognise a CoA carboxyltransferase N-terminal domain in the interval 25–294 (LWIKDPSTGE…NSDAPAPPEA (270 aa)).

The protein belongs to the AccD/PCCB family. Acetyl-CoA carboxylase is a heterohexamer composed of biotin carboxyl carrier protein (AccB), biotin carboxylase (AccC) and two subunits each of ACCase subunit alpha (AccA) and ACCase subunit beta (AccD).

It is found in the cytoplasm. The enzyme catalyses N(6)-carboxybiotinyl-L-lysyl-[protein] + acetyl-CoA = N(6)-biotinyl-L-lysyl-[protein] + malonyl-CoA. Its pathway is lipid metabolism; malonyl-CoA biosynthesis; malonyl-CoA from acetyl-CoA: step 1/1. Functionally, component of the acetyl coenzyme A carboxylase (ACC) complex. Biotin carboxylase (BC) catalyzes the carboxylation of biotin on its carrier protein (BCCP) and then the CO(2) group is transferred by the transcarboxylase to acetyl-CoA to form malonyl-CoA. The protein is Acetyl-coenzyme A carboxylase carboxyl transferase subunit beta of Brucella ovis (strain ATCC 25840 / 63/290 / NCTC 10512).